A 301-amino-acid chain; its full sequence is Acetyl-coenzyme A carboxylase carboxyl transferase subunit beta (301 aa).

Positions 25–294 (LWIKCPETGE…SAANDVTRGA (270 aa)) constitute a CoA carboxyltransferase N-terminal domain.

Belongs to the AccD/PCCB family. Acetyl-CoA carboxylase is a heterohexamer composed of biotin carboxyl carrier protein (AccB), biotin carboxylase (AccC) and two subunits each of ACCase subunit alpha (AccA) and ACCase subunit beta (AccD).

The protein localises to the cytoplasm. The catalysed reaction is N(6)-carboxybiotinyl-L-lysyl-[protein] + acetyl-CoA = N(6)-biotinyl-L-lysyl-[protein] + malonyl-CoA. Its pathway is lipid metabolism; malonyl-CoA biosynthesis; malonyl-CoA from acetyl-CoA: step 1/1. Functionally, component of the acetyl coenzyme A carboxylase (ACC) complex. Biotin carboxylase (BC) catalyzes the carboxylation of biotin on its carrier protein (BCCP) and then the CO(2) group is transferred by the transcarboxylase to acetyl-CoA to form malonyl-CoA. The protein is Acetyl-coenzyme A carboxylase carboxyl transferase subunit beta of Rhizobium etli (strain ATCC 51251 / DSM 11541 / JCM 21823 / NBRC 15573 / CFN 42).